Consider the following 419-residue polypeptide: L-rhamnose isomerase (419 aa).

3 residues coordinate Mn(2+): H262, D294, and D296.

The protein belongs to the rhamnose isomerase family. In terms of assembly, homotetramer. The cofactor is Mn(2+).

The protein resides in the cytoplasm. It carries out the reaction L-rhamnopyranose = L-rhamnulose. Its pathway is carbohydrate degradation; L-rhamnose degradation; glycerone phosphate from L-rhamnose: step 1/3. Its function is as follows. Catalyzes the interconversion of L-rhamnose and L-rhamnulose. This Escherichia coli O17:K52:H18 (strain UMN026 / ExPEC) protein is L-rhamnose isomerase.